Reading from the N-terminus, the 215-residue chain is 3-demethoxyubiquinol 3-hydroxylase (215 aa).

Fe cation contacts are provided by E64, E94, H97, E146, E178, and H181.

This sequence belongs to the COQ7 family. It depends on Fe cation as a cofactor.

Its subcellular location is the cell membrane. It carries out the reaction a 5-methoxy-2-methyl-3-(all-trans-polyprenyl)benzene-1,4-diol + AH2 + O2 = a 3-demethylubiquinol + A + H2O. Its pathway is cofactor biosynthesis; ubiquinone biosynthesis. Catalyzes the hydroxylation of 2-nonaprenyl-3-methyl-6-methoxy-1,4-benzoquinol during ubiquinone biosynthesis. The protein is 3-demethoxyubiquinol 3-hydroxylase of Pseudomonas fluorescens (strain SBW25).